We begin with the raw amino-acid sequence, 257 residues long: MRDVQNEKDYRGIYLRKVGIKNIHWPIKIVTKSGDYQSTVASIDISVDLREDLRGTHMSRFVEVLNGIDSLHPENLGKILQEVREKLRADSSHIKISFPYFIFKKAPVSQISSPNMVECVIDAELSKKLDMIIGVKVPIHTLCPCSKEISEYGAHNQRGVAEIYVRSKKLIWFEDLVEISEKSASAPIYSLLKRPDEKYITEMAYNNPKFVEDVVRDIVSELEKEPKISWYRVEVTSFESIHNHNAFACVEKGWVKK.

This sequence belongs to the GTP cyclohydrolase IV family.

It carries out the reaction GTP + H2O = 7,8-dihydroneopterin 3'-triphosphate + formate + H(+). The protein operates within cofactor biosynthesis; 7,8-dihydroneopterin triphosphate biosynthesis; 7,8-dihydroneopterin triphosphate from GTP: step 1/1. In terms of biological role, converts GTP to 7,8-dihydroneopterin triphosphate. The polypeptide is GTP cyclohydrolase FolE2 (Dictyoglomus thermophilum (strain ATCC 35947 / DSM 3960 / H-6-12)).